A 110-amino-acid chain; its full sequence is Protein SPIRAL1-like 2 (110 aa).

The disordered stretch occupies residues 28–110; the sequence is AVNKTPAETE…LDYLFGGGSN (83 aa). The segment covering 40-52 has biased composition (low complexity); it reads AHAPPTQAAAANA. Positions 63–82 are enriched in polar residues; that stretch reads LNSNSANNYMRAEGQNTGNF. Serine 67 bears the Phosphoserine mark. Residues 95–110 show a composition bias toward gly residues; the sequence is PGGGSSLDYLFGGGSN.

Belongs to the SPIRAL1 family. In terms of tissue distribution, ubiquitous.

Its function is as follows. Acts redundantly with SPR1 in maintaining the cortical microtubules organization essential for anisotropic cell growth. The chain is Protein SPIRAL1-like 2 (SP1L2) from Arabidopsis thaliana (Mouse-ear cress).